We begin with the raw amino-acid sequence, 151 residues long: S-protein homolog 27 (151 aa).

N-linked (GlcNAc...) asparagine glycosylation is found at Asn-91 and Asn-123.

Belongs to the plant self-incompatibility (S1) protein family.

The protein localises to the secreted. The polypeptide is S-protein homolog 27 (Arabidopsis thaliana (Mouse-ear cress)).